The primary structure comprises 148 residues: Hemoglobin subunit alpha (148 aa).

Ser1 is subject to N-acetylserine. Residues 8–148 (DYSAADRAEL…VCHELSSRYR (141 aa)) enclose the Globin domain. His66 contributes to the O2 binding site. His95 provides a ligand contact to heme b.

It belongs to the globin family. Heterotetramer of two alpha chains and two beta chains. In terms of tissue distribution, red blood cells.

Functionally, involved in oxygen transport from the lung to the various peripheral tissues. The protein is Hemoglobin subunit alpha (HBA) of Heterodontus portusjacksoni (Port Jackson shark).